A 208-amino-acid chain; its full sequence is Imidazole glycerol phosphate synthase subunit HisH (208 aa).

A Glutamine amidotransferase type-1 domain is found at 1 to 206 (MIVIIDYDTG…KEVIRSCKSS (206 aa)). The active-site Nucleophile is Cys-79. Active-site residues include His-181 and Glu-183.

As to quaternary structure, heterodimer of HisH and HisF.

Its subcellular location is the cytoplasm. It catalyses the reaction 5-[(5-phospho-1-deoxy-D-ribulos-1-ylimino)methylamino]-1-(5-phospho-beta-D-ribosyl)imidazole-4-carboxamide + L-glutamine = D-erythro-1-(imidazol-4-yl)glycerol 3-phosphate + 5-amino-1-(5-phospho-beta-D-ribosyl)imidazole-4-carboxamide + L-glutamate + H(+). The enzyme catalyses L-glutamine + H2O = L-glutamate + NH4(+). Its pathway is amino-acid biosynthesis; L-histidine biosynthesis; L-histidine from 5-phospho-alpha-D-ribose 1-diphosphate: step 5/9. In terms of biological role, IGPS catalyzes the conversion of PRFAR and glutamine to IGP, AICAR and glutamate. The HisH subunit catalyzes the hydrolysis of glutamine to glutamate and ammonia as part of the synthesis of IGP and AICAR. The resulting ammonia molecule is channeled to the active site of HisF. This Listeria monocytogenes serotype 4b (strain CLIP80459) protein is Imidazole glycerol phosphate synthase subunit HisH.